The chain runs to 362 residues: Ciliary neurotrophic factor receptor subunit alpha (362 aa).

The signal sequence occupies residues 1–19 (MANPVPSACCVVLAAVVVV). The region spanning 23–103 (RHSQQDSHIQ…HLKYQTYLRV (81 aa)) is the Ig-like C2-type domain. C44 and C87 are oxidised to a cystine. Residues N58, N68, N140, and N188 are each glycosylated (N-linked (GlcNAc...) asparagine). 2 Fibronectin type-III domains span residues 106-203 (PPKE…VKPD) and 204-304 (PPES…TEEP). A WSXWS motif motif is present at residues 288-292 (WSDWS). A lipid anchor (GPI-anchor amidated aspartate) is attached at D334. Residues 335-362 (KGAGVGSGAVAVCWTAGLVLAAYGVLFI) constitute a propeptide, removed in mature form.

This sequence belongs to the type I cytokine receptor family. Type 3 subfamily. In terms of assembly, heterotrimer of the alpha subunit, LIFR and IL6ST. As to expression, highly expressed in nervous system. Also found in skeletal muscle.

It is found in the cell membrane. Binds to CNTF (GPA). The alpha subunit provides the receptor specificity. The protein is Ciliary neurotrophic factor receptor subunit alpha (CNTFR) of Gallus gallus (Chicken).